We begin with the raw amino-acid sequence, 676 residues long: Pre-mRNA-splicing factor CLF1 (676 aa).

HAT repeat units follow at residues Glu-46–Glu-78, Arg-80–Lys-112, Lys-114–Thr-146, Gly-148–Arg-179, Arg-181–Glu-212, Asn-215–Arg-255, Arg-257–Gln-291, Val-301–Glu-333, Leu-336–Lys-369, Lys-379–Arg-415, Gly-417–Lys-449, Arg-451–Met-483, Gly-485–Glu-519, Glu-521–Thr-553, Glu-576–Glu-614, and Ser-620–Pro-652. Over residues Gly-616–Lys-628 the composition is skewed to basic and acidic residues. The disordered stretch occupies residues Gly-616–Arg-636.

This sequence belongs to the crooked-neck family. Associated with the spliceosome.

Its subcellular location is the nucleus. Involved in pre-mRNA splicing and cell cycle progression. Required for the spliceosome assembly and initiation of the DNA replication. This chain is Pre-mRNA-splicing factor CLF1 (CLF1), found in Yarrowia lipolytica (strain CLIB 122 / E 150) (Yeast).